We begin with the raw amino-acid sequence, 224 residues long: Imidazoleglycerol-phosphate dehydratase (224 aa).

The protein belongs to the imidazoleglycerol-phosphate dehydratase family.

The catalysed reaction is D-erythro-1-(imidazol-4-yl)glycerol 3-phosphate = 3-(imidazol-4-yl)-2-oxopropyl phosphate + H2O. It functions in the pathway amino-acid biosynthesis; L-histidine biosynthesis; L-histidine from 5-phospho-alpha-D-ribose 1-diphosphate: step 6/9. In Cyberlindnera jadinii (Torula yeast), this protein is Imidazoleglycerol-phosphate dehydratase (HIS3).